The sequence spans 382 residues: Regulatory protein RapC (382 aa).

TPR repeat units follow at residues 102–138 (YYVNFFRGMYEFDKREFISAITYYKQAEKKLSFVADH), 149–182 (AEAYYYMKQTYFSLINIKNAYEIYVEQETYNVRI), 183–216 (IQCHFVFGVNLMDERNFEQAARHFKLALNMAQAE), 223–256 (GRAYYNLGLCYYNQDLLDPAIDYFEKAVSTFESS), and 263–296 (PQAYFLITLIYYKQGKHDKASEYHKRGYEYAKET).

This sequence belongs to the Rap family. In terms of assembly, homodimer. Interacts specifically with the C-terminal DNA-binding domain of ComA. Interacts with CSF.

It is found in the cytoplasm. With respect to regulation, inhibited by the competence and sporulation stimulating factor (CSF), encoded by phrC, which prevents RapC-ComA interaction. In terms of biological role, involved in the regulation of genetic competence development. Inhibits the activity of ComA, a transcriptional factor that regulates the development of genetic competence. Acts by binding to ComA, independently of its phosphorylation state, leading to the inhibition of ComA DNA-binding activity. Does not dephosphorylate phospho-ComA and does not affect the phosphorylation level of the ComP-ComA system. The chain is Regulatory protein RapC (rapC) from Bacillus subtilis (strain 168).